We begin with the raw amino-acid sequence, 433 residues long: Xylose isomerase (433 aa).

Catalysis depends on residues H99 and D102. Residues E230, E266, H269, D294, D305, D307, and D337 each contribute to the Mg(2+) site.

It belongs to the xylose isomerase family. As to quaternary structure, homotetramer. It depends on Mg(2+) as a cofactor.

The protein resides in the cytoplasm. It catalyses the reaction alpha-D-xylose = alpha-D-xylulofuranose. The polypeptide is Xylose isomerase (Roseobacter denitrificans (strain ATCC 33942 / OCh 114) (Erythrobacter sp. (strain OCh 114))).